A 517-amino-acid chain; its full sequence is Tyrosine-protein kinase Fgr (517 aa).

The N-myristoyl glycine moiety is linked to residue Gly2. S-palmitoyl cysteine attachment occurs at residues Cys3 and Cys6. Ser13 is subject to Phosphoserine. Tyr32 is modified (phosphotyrosine). At Ser50 the chain carries Phosphoserine. The 62-residue stretch at 65 to 126 folds into the SH3 domain; the sequence is TGVTIFVALY…PSNYVAPVDS (62 aa). Residues 102–103 form an interaction with CLNK region; the sequence is WW. In terms of domain architecture, SH2 spans 132-229; that stretch reads WYFGKISRKD…GLCYLLTAPC (98 aa). A Phosphotyrosine modification is found at Tyr196. Ser206 is modified (phosphoserine). The 254-residue stretch at 251 to 504 folds into the Protein kinase domain; the sequence is IALERRLGTG…YLQSFLEDYF (254 aa). Residues 257 to 265 and Lys279 contribute to the ATP site; that span reads LGTGCFGDV. Asp370 acts as the Proton acceptor in catalysis. At Tyr400 the chain carries Phosphotyrosine. Tyr511 is modified (phosphotyrosine; by SRC).

This sequence belongs to the protein kinase superfamily. Tyr protein kinase family. SRC subfamily. As to quaternary structure, interacts with ITGB1, ITGB2, MS4A2/FCER1B, FCER1G and FCGR2. Interacts (via SH2 domain) with SYK (tyrosine phosphorylated). Interacts (via SH2 domain) with FLT3 (tyrosine phosphorylated). Interacts with PTK2/FAK1. Interacts (via SH2 domain) with HCLS1 (tyrosine phosphorylated by SYK). Interacts with SIRPA and PTPNS1. Interacts (not phosphorylated on tyrosine residues) with CBL; FGR tyrosine phosphorylation promotes dissociation. Interacts with CLNK. Post-translationally, ubiquitinated. Becomes ubiquitinated in response to ITGB2 signaling; this does not lead to degradation. In terms of processing, phosphorylated. Autophosphorylated on tyrosine residues. Becomes phosphorylated in response to FCGR2 engagement, cell adhesion and signaling by ITGB2. Prior phosphorylation at Tyr-511 by SRC inhibits ulterior autophosphorylation at Tyr-400. In terms of tissue distribution, expressed in natural killer cells (at protein level).

The protein localises to the cell membrane. The protein resides in the cell projection. It is found in the ruffle membrane. It localises to the cytoplasm. Its subcellular location is the cytosol. The protein localises to the cytoskeleton. The protein resides in the mitochondrion inner membrane. It is found in the mitochondrion intermembrane space. It carries out the reaction L-tyrosyl-[protein] + ATP = O-phospho-L-tyrosyl-[protein] + ADP + H(+). With respect to regulation, activated by autophosphorylation. Prior phosphorylation at Tyr-511 by SRC inhibits ulterior autophosphorylation at Tyr-400. Activated by phorbol myristate acetate, phosphatidic acid and poly-Lys. Binding (via SH2 domain) of HCLS1 that is already phosphorylated by SYK strongly increases kinase activity. Non-receptor tyrosine-protein kinase that transmits signals from cell surface receptors devoid of kinase activity and contributes to the regulation of immune responses, including neutrophil, monocyte, macrophage and mast cell functions, cytoskeleton remodeling in response to extracellular stimuli, phagocytosis, cell adhesion and migration. Promotes mast cell degranulation, release of inflammatory cytokines and IgE-mediated anaphylaxis. Acts downstream of receptors that bind the Fc region of immunoglobulins, such as MS4A2/FCER1B, FCER1G and FCGR2. Acts downstream of ITGB1 and ITGB2, and regulates actin cytoskeleton reorganization, cell spreading and adhesion. Depending on the context, activates or inhibits cellular responses. Functions as a negative regulator of ITGB2 signaling, phagocytosis and SYK activity in monocytes. Required for normal ITGB1 and ITGB2 signaling, normal cell spreading and adhesion in neutrophils and macrophages. Functions as a positive regulator of cell migration and regulates cytoskeleton reorganization via RAC1 activation. Phosphorylates SYK (in vitro) and promotes SYK-dependent activation of AKT1 and MAP kinase signaling. Phosphorylates PLD2 in antigen-stimulated mast cells, leading to PLD2 activation and the production of the signaling molecules lysophosphatidic acid and diacylglycerol. Promotes activation of PIK3R1. Phosphorylates FASLG, and thereby regulates its ubiquitination and subsequent internalization. Phosphorylates ABL1. Promotes phosphorylation of CBL, CTTN, PIK3R1, PTK2/FAK1, PTK2B/PYK2 and VAV2. Phosphorylates HCLS1 that has already been phosphorylated by SYK, but not unphosphorylated HCLS1. Together with CLNK, it acts as a negative regulator of natural killer cell-activating receptors and inhibits interferon-gamma production. The protein is Tyrosine-protein kinase Fgr (Fgr) of Mus musculus (Mouse).